Consider the following 712-residue polypeptide: Glycine--tRNA ligase beta subunit (712 aa).

It belongs to the class-II aminoacyl-tRNA synthetase family. Tetramer of two alpha and two beta subunits.

It localises to the cytoplasm. The catalysed reaction is tRNA(Gly) + glycine + ATP = glycyl-tRNA(Gly) + AMP + diphosphate. This chain is Glycine--tRNA ligase beta subunit, found in Acaryochloris marina (strain MBIC 11017).